Consider the following 121-residue polypeptide: Large ribosomal subunit protein uL14 (121 aa).

This sequence belongs to the universal ribosomal protein uL14 family. In terms of assembly, part of the 50S ribosomal subunit. Forms a cluster with proteins L3 and L19. In the 70S ribosome, L14 and L19 interact and together make contacts with the 16S rRNA in bridges B5 and B8.

Functionally, binds to 23S rRNA. Forms part of two intersubunit bridges in the 70S ribosome. In Mycoplasmopsis synoviae (strain 53) (Mycoplasma synoviae), this protein is Large ribosomal subunit protein uL14.